A 346-amino-acid polypeptide reads, in one-letter code: Peripherin-2 (346 aa).

Residues 1–24 are Cytoplasmic-facing; that stretch reads MALLKVKFDQKKRVKLAQGLWLMN. The chain crosses the membrane as a helical span at residues 25–43; it reads WLSVLAGIVIFSLGLFLKI. The Lumenal portion of the chain corresponds to 44–61; that stretch reads ELRKRSDVMNNSESHFVP. Asn-53 carries N-linked (GlcNAc...) asparagine glycosylation. The chain crosses the membrane as a helical span at residues 62–80; that stretch reads NSLIVMGVLSCVFNSLAGK. Topologically, residues 81-99 are cytoplasmic; it reads ICYDALDPAKYAKWKPWLK. Residues 100 to 123 traverse the membrane as a helical segment; that stretch reads PYLAVCVLFNIALFLVTLCCFLMR. The Lumenal segment spans residues 124–264; that stretch reads GSLESTLAHG…LSYYSSLMNS (141 aa). Asn-229 carries an N-linked (GlcNAc...) asparagine glycan. The helical transmembrane segment at 265–290 threads the bilayer; sequence MGAVTLLVWLFEVTITIGLRYLHTAL. The Cytoplasmic segment spans residues 291 to 346; it reads EGVSNPEDPECESEGWLLEKSVSETWKAFLESLKKLGKSNQVEAEGADAGQAPEAG. Positions 341 to 346 are interaction with MREG; sequence QAPEAG.

The protein belongs to the PRPH2/ROM1 family. As to quaternary structure, homodimer; disulfide-linked. Forms a homotetramer. Forms a heterotetramer with ROM1. Homotetramer and heterotetramer core complexes go on to form higher order complexes by formation of intermolecular disulfide bonds. Interacts with MREG. Interacts with STX3. Interacts with SNAP25. As to expression, retina (photoreceptor). In rim region of ROS (rod outer segment) disks.

It is found in the membrane. The protein resides in the cell projection. It localises to the cilium. Its subcellular location is the photoreceptor outer segment. The protein localises to the photoreceptor inner segment. Essential for retina photoreceptor outer segment disk morphogenesis, may also play a role with ROM1 in the maintenance of outer segment disk structure. Required for the maintenance of retinal outer nuclear layer thickness. Required for the correct development and organization of the photoreceptor inner segment. The protein is Peripherin-2 (PRPH2) of Canis lupus familiaris (Dog).